The following is a 459-amino-acid chain: Chromosomal replication initiator protein DnaA (459 aa).

Positions 1–83 (MKNAREIWRN…NKLEIHFIEE (83 aa)) are domain I, interacts with DnaA modulators. A domain II region spans residues 83–121 (ESQAHKYAPADGSSNESIAVTETKEQPVLLPSKEEGDLG). Residues 122 to 338 (QLNDKYIFET…GALTRVVAYA (217 aa)) are domain III, AAA+ region. The ATP site is built by Gly-166, Gly-168, Lys-169, and Thr-170. Residues 339-459 (KLVGRPIDPD…IQTLKKALSN (121 aa)) form a domain IV, binds dsDNA region.

It belongs to the DnaA family. Oligomerizes as a right-handed, spiral filament on DNA at oriC.

The protein localises to the cytoplasm. Plays an essential role in the initiation and regulation of chromosomal replication. ATP-DnaA binds to the origin of replication (oriC) to initiate formation of the DNA replication initiation complex once per cell cycle. Binds the DnaA box (a 9 base pair repeat at the origin) and separates the double-stranded (ds)DNA. Forms a right-handed helical filament on oriC DNA; dsDNA binds to the exterior of the filament while single-stranded (ss)DNA is stabiized in the filament's interior. The ATP-DnaA-oriC complex binds and stabilizes one strand of the AT-rich DNA unwinding element (DUE), permitting loading of DNA polymerase. After initiation quickly degrades to an ADP-DnaA complex that is not apt for DNA replication. Binds acidic phospholipids. The sequence is that of Chromosomal replication initiator protein DnaA from Exiguobacterium sp. (strain ATCC BAA-1283 / AT1b).